The chain runs to 182 residues: dTTP/UTP pyrophosphatase (182 aa).

The Proton acceptor role is filled by D64.

Belongs to the Maf family. YhdE subfamily. A divalent metal cation is required as a cofactor.

It localises to the cytoplasm. It carries out the reaction dTTP + H2O = dTMP + diphosphate + H(+). The enzyme catalyses UTP + H2O = UMP + diphosphate + H(+). Nucleoside triphosphate pyrophosphatase that hydrolyzes dTTP and UTP. May have a dual role in cell division arrest and in preventing the incorporation of modified nucleotides into cellular nucleic acids. The protein is dTTP/UTP pyrophosphatase of Thermosipho melanesiensis (strain DSM 12029 / CIP 104789 / BI429).